Consider the following 154-residue polypeptide: Myoglobin (154 aa).

Residues 2 to 148 (GLSDGEWQLV…FRNDIAAKYK (147 aa)) enclose the Globin domain. Serine 4 carries the post-translational modification Phosphoserine. Position 65 (histidine 65) interacts with nitrite. Histidine 65 contributes to the O2 binding site. Threonine 68 is subject to Phosphothreonine. Histidine 94 contacts heme b.

The protein belongs to the globin family. As to quaternary structure, monomeric.

It is found in the cytoplasm. The protein localises to the sarcoplasm. The enzyme catalyses Fe(III)-heme b-[protein] + nitric oxide + H2O = Fe(II)-heme b-[protein] + nitrite + 2 H(+). It carries out the reaction H2O2 + AH2 = A + 2 H2O. Its function is as follows. Monomeric heme protein which primary function is to store oxygen and facilitate its diffusion within muscle tissues. Reversibly binds oxygen through a pentacoordinated heme iron and enables its timely and efficient release as needed during periods of heightened demand. Depending on the oxidative conditions of tissues and cells, and in addition to its ability to bind oxygen, it also has a nitrite reductase activity whereby it regulates the production of bioactive nitric oxide. Under stress conditions, like hypoxia and anoxia, it also protects cells against reactive oxygen species thanks to its pseudoperoxidase activity. This chain is Myoglobin (MB), found in Lagostomus maximus (Plains viscacha).